The sequence spans 292 residues: 4-hydroxy-tetrahydrodipicolinate synthase (292 aa).

Residue T45 participates in pyruvate binding. Y133 functions as the Proton donor/acceptor in the catalytic mechanism. Residue K161 is the Schiff-base intermediate with substrate of the active site. Residue I203 coordinates pyruvate.

This sequence belongs to the DapA family. As to quaternary structure, homotetramer; dimer of dimers.

Its subcellular location is the cytoplasm. The catalysed reaction is L-aspartate 4-semialdehyde + pyruvate = (2S,4S)-4-hydroxy-2,3,4,5-tetrahydrodipicolinate + H2O + H(+). Its pathway is amino-acid biosynthesis; L-lysine biosynthesis via DAP pathway; (S)-tetrahydrodipicolinate from L-aspartate: step 3/4. Its function is as follows. Catalyzes the condensation of (S)-aspartate-beta-semialdehyde [(S)-ASA] and pyruvate to 4-hydroxy-tetrahydrodipicolinate (HTPA). The sequence is that of 4-hydroxy-tetrahydrodipicolinate synthase from Vibrio cholerae serotype O1 (strain ATCC 39541 / Classical Ogawa 395 / O395).